The sequence spans 66 residues: Beta-mammal toxin Co3 (66 aa).

An LCN-type CS-alpha/beta domain is found at 1-66 (KEGYIVNYYD…VWPLPNKTCN (66 aa)). 4 cysteine pairs are disulfide-bonded: Cys12-Cys65, Cys16-Cys41, Cys25-Cys46, and Cys29-Cys48.

Expressed by the venom gland.

It is found in the secreted. Its function is as follows. Beta toxins bind voltage-independently at site-4 of sodium channels (Nav) and shift the voltage of activation toward more negative potentials thereby affecting sodium channel activation and promoting spontaneous and repetitive firing. This toxin acts on human Nav1.2/SCN2A, Nav1.4/SCN4A and Nav1.6/SCN8A voltage-gated sodium channels. Also, it reduces the peak of sodium currents in Nav1.5/SCN5A at all potentials. In vivo, is lethal to mice when intraperitoneally injected at a dose of 5ug. No activity is observed when injected into crickets or woodlice. The protein is Beta-mammal toxin Co3 of Centruroides ornatus (Scorpion).